Reading from the N-terminus, the 238-residue chain is ATP synthase subunit a (238 aa).

4 helical membrane passes run 17–37, 80–100, 112–132, and 194–214; these read LSNI…AIIC, ITLL…QIAI, DPIV…YYGI, and IFVG…SIFI.

Belongs to the ATPase A chain family. In terms of assembly, F-type ATPases have 2 components, CF(1) - the catalytic core - and CF(0) - the membrane proton channel. CF(1) has five subunits: alpha(3), beta(3), gamma(1), delta(1), epsilon(1). CF(0) has three main subunits: a(1), b(2) and c(9-12). The alpha and beta chains form an alternating ring which encloses part of the gamma chain. CF(1) is attached to CF(0) by a central stalk formed by the gamma and epsilon chains, while a peripheral stalk is formed by the delta and b chains.

The protein localises to the cell membrane. In terms of biological role, key component of the proton channel; it plays a direct role in the translocation of protons across the membrane. This chain is ATP synthase subunit a, found in Listeria innocua serovar 6a (strain ATCC BAA-680 / CLIP 11262).